The primary structure comprises 689 residues: Centrosomal protein of 78 kDa (689 aa).

A phosphoserine mark is found at S325 and S327. 3 disordered regions span residues 432–451 (SSEVEEVDDSSESVHEVPEK), 563–589 (PQMTSTVSNPPKEEKKALEDEKPEPKQ), and 614–689 (DSFP…TESH). Residues 450–505 (EKTSIEQEALQEKLEECLKQLKEERVIRLKVDKRVSELEHENAQLRNINFSLSEAL) are a coiled coil. 2 stretches are compositionally biased toward basic and acidic residues: residues 573–587 (PKEEKKALEDEKPEP) and 666–689 (QRKEEELSRNSRSSSEKKTKTESH).

The protein belongs to the CEP78 family. As to quaternary structure, interacts with PLK4. Interacts with FAM161A. Interacts with IFT20; regulating IFT20 stability and localization. Interacts with TTC21A; regulating TTC21A stability and localization. Interacts with USP16; promoting USP16-dependent deubiquitination of tektins. Interacts with DCAF1/VPRBP; promoting localization of the EDVP complex to centrosomes. Interacts with CEP350; promoting CEP78 localization to centrosome and centriole. In terms of tissue distribution, widely expressed. Expressed in different retinal cell types with higher expression in cone compared to rod cells (at protein level).

The protein resides in the cytoplasm. The protein localises to the cytoskeleton. It is found in the microtubule organizing center. Its subcellular location is the centrosome. It localises to the centriole. The protein resides in the cilium basal body. Its function is as follows. Centriole wall protein that localizes to mature centrioles and regulates centriole and cilia biogenesis. Involved in centrosome duplication: required for efficient PLK4 centrosomal localization and PLK4-induced overduplication of centrioles. Involved in cilium biogenesis and controls cilium length. Acts as a regulator of protein stability by preventing ubiquitination of centrosomal proteins, such as CCP110 and tektins. Associates with the EDVP complex, preventing ubiquitination and degradation of CCP110. Promotes deubiquitination of tektin proteins (TEKT1, TEKT2, TEK3, TEKT4 and TEKT5) via its interaction with USP16. This chain is Centrosomal protein of 78 kDa, found in Homo sapiens (Human).